Reading from the N-terminus, the 415-residue chain is L-cysteine:1D-myo-inositol 2-amino-2-deoxy-alpha-D-glucopyranoside ligase (415 aa).

Residues 1-20 (MQSWSETAVPSVPGQGPPLR) form a disordered region. Cysteine 43 is a Zn(2+) binding site. L-cysteinyl-5'-AMP is bound by residues 43–46 (CGIT), threonine 58, and 81–83 (NVT). A 'HIGH' region motif is present at residues 45 to 55 (ITPYDATHLGH). Positions 187 to 192 (ERGGDP) match the 'ERGGDP' region motif. Residue tryptophan 227 coordinates L-cysteinyl-5'-AMP. Cysteine 231 is a Zn(2+) binding site. L-cysteinyl-5'-AMP is bound at residue 249 to 251 (GSD). Position 256 (histidine 256) interacts with Zn(2+). Residue isoleucine 283 participates in L-cysteinyl-5'-AMP binding. Residues 289–293 (KMSKS) carry the 'KMSKS' region motif.

Belongs to the class-I aminoacyl-tRNA synthetase family. MshC subfamily. In terms of assembly, monomer. Zn(2+) is required as a cofactor.

The catalysed reaction is 1D-myo-inositol 2-amino-2-deoxy-alpha-D-glucopyranoside + L-cysteine + ATP = 1D-myo-inositol 2-(L-cysteinylamino)-2-deoxy-alpha-D-glucopyranoside + AMP + diphosphate + H(+). In terms of biological role, catalyzes the ATP-dependent condensation of GlcN-Ins and L-cysteine to form L-Cys-GlcN-Ins. This Rhodococcus jostii (strain RHA1) protein is L-cysteine:1D-myo-inositol 2-amino-2-deoxy-alpha-D-glucopyranoside ligase.